Here is a 320-residue protein sequence, read N- to C-terminus: Solute carrier family 35 member B1 (320 aa).

8 consecutive transmembrane segments (helical) span residues 9-29 (GLRL…YGIL), 49-69 (FALS…KLLI), 81-103 (QSWL…NSAL), 134-154 (YPLT…LFMY), 166-186 (TVGY…LTGV), 202-222 (MMLS…VLTG), 241-261 (IVLF…TVVY), and 283-303 (VILF…LVFL). A Di-lysine motif motif is present at residues 316–320 (KKPSH).

This sequence belongs to the nucleotide-sugar transporter family. SLC35B subfamily.

Its subcellular location is the endoplasmic reticulum membrane. Functionally, probable sugar transporter. This is Solute carrier family 35 member B1 (slc35b1) from Xenopus laevis (African clawed frog).